Reading from the N-terminus, the 438-residue chain is Diaminopimelate decarboxylase (438 aa).

The residue at position 73 (K73) is an N6-(pyridoxal phosphate)lysine. Residues S217, G254, and 294 to 297 (EPGR) contribute to the pyridoxal 5'-phosphate site. Positions 297, 333, and 337 each coordinate substrate. The Proton donor role is filled by C362. Substrate-binding residues include E363 and Y391. Y391 contacts pyridoxal 5'-phosphate.

The protein belongs to the Orn/Lys/Arg decarboxylase class-II family. LysA subfamily. Homodimer. Pyridoxal 5'-phosphate is required as a cofactor.

It catalyses the reaction meso-2,6-diaminopimelate + H(+) = L-lysine + CO2. It functions in the pathway amino-acid biosynthesis; L-lysine biosynthesis via DAP pathway; L-lysine from DL-2,6-diaminopimelate: step 1/1. With respect to regulation, competitively inhibited by the substrate analog azelaic acid in vitro but not in vivo. Specifically catalyzes the decarboxylation of meso-diaminopimelate (meso-DAP) to L-lysine. The protein is Diaminopimelate decarboxylase of Methanocaldococcus jannaschii (strain ATCC 43067 / DSM 2661 / JAL-1 / JCM 10045 / NBRC 100440) (Methanococcus jannaschii).